Here is a 302-residue protein sequence, read N- to C-terminus: MTDYNLTHLKQLEAESIHIIREVAAEFERPVMLYSIGKDSSVMLHLARKAFFPGKPPFPLMHVDTTWKFQDMITFRDQQAAKFGLDLIVHINEDGVRQGIGPFTHGSAKHTDVMKTESLKQALNKYKFDAAFGGARRDEEKSRAKERVYSFRDSNHRWDPKNQRPELWNLYNGKINKGESIRVFPLSNWTELDIWQYIYLENIELVPLYFSAKRPVVERDGTMIMVDDDRMPLKPGETPMMKDVRFRTLGCYPLTGAIESTATTLPEIIQEMLLTTSSERQGRVIDHDQAGSMEQKKREGYF.

Residues 280-302 (RQGRVIDHDQAGSMEQKKREGYF) are disordered.

Belongs to the PAPS reductase family. CysD subfamily. In terms of assembly, heterodimer composed of CysD, the smaller subunit, and CysN.

The enzyme catalyses sulfate + ATP + H(+) = adenosine 5'-phosphosulfate + diphosphate. Its pathway is sulfur metabolism; hydrogen sulfide biosynthesis; sulfite from sulfate: step 1/3. With CysN forms the ATP sulfurylase (ATPS) that catalyzes the adenylation of sulfate producing adenosine 5'-phosphosulfate (APS) and diphosphate, the first enzymatic step in sulfur assimilation pathway. APS synthesis involves the formation of a high-energy phosphoric-sulfuric acid anhydride bond driven by GTP hydrolysis by CysN coupled to ATP hydrolysis by CysD. The sequence is that of Sulfate adenylyltransferase subunit 2 from Hahella chejuensis (strain KCTC 2396).